A 164-amino-acid chain; its full sequence is Diphosphoinositol polyphosphate phosphohydrolase 3-alpha (164 aa).

Substrate is bound by residues Arg-9, 17 to 19 (KKR), and 38 to 40 (SSR). In terms of domain architecture, Nudix hydrolase spans 17–144 (KKRAACLCFR…VHAEYLEKLK (128 aa)). Residues Gly-49 and Glu-65 each coordinate Mg(2+). The short motif at 50-71 (GGMEPEEEPDGAAVREVYEEAG) is the Nudix box element. The active-site Proton acceptor is the Glu-68. Residue Glu-69 coordinates Mg(2+). Substrate-binding positions include 89 to 91 (RKH), Arg-115, and Lys-133. Residues 144-164 (KLGGSPTNGNSAAPSPPESEP) are disordered.

This sequence belongs to the Nudix hydrolase family. DIPP subfamily. Requires Mg(2+) as cofactor. Mn(2+) is required as a cofactor. As to expression, mainly expressed in testis, liver kidney and, at lower level, in heart, brain, spleen, lung and skeletal muscle.

It localises to the cytoplasm. It carries out the reaction diphospho-myo-inositol polyphosphate + H2O = myo-inositol polyphosphate + phosphate.. It catalyses the reaction P(1),P(6)-bis(5'-adenosyl) hexaphosphate + H2O = adenosine 5'-pentaphosphate + AMP + 2 H(+). The catalysed reaction is P(1),P(5)-bis(5'-adenosyl) pentaphosphate + H2O = adenosine 5'-tetraphosphate + AMP + 2 H(+). In terms of biological role, cleaves a beta-phosphate from the diphosphate groups in PP-InsP5 (diphosphoinositol pentakisphosphate), suggesting that it may play a role in signal transduction. Also able to catalyze the hydrolysis of dinucleoside oligophosphates, with Ap6A and Ap5A being the preferred substrates. The major reaction products are ADP and p4a from Ap6A and ADP and ATP from Ap5A. Also able to hydrolyze 5-phosphoribose 1-diphosphate; however, the relevance of such activity in vivo remains unclear. The protein is Diphosphoinositol polyphosphate phosphohydrolase 3-alpha of Mus musculus (Mouse).